Here is a 352-residue protein sequence, read N- to C-terminus: Gap junction alpha-4 protein (352 aa).

Residues 2-23 lie on the Cytoplasmic side of the membrane; that stretch reads GDWEFLEKLLDQVQEHSTSIGK. A helical transmembrane segment spans residues 24-46; sequence IWLMVLFIFRILILGLAGESVWG. Residues 47–76 are Extracellular-facing; it reads DEQSDFICNTEQPGCTNVCYDKAFPISHVR. The helical transmembrane segment at 77–99 threads the bilayer; that stretch reads YWVLQFLFVSTPTLFYLGHVIYL. At 100–153 the chain is on the cytoplasmic side; that stretch reads SRREEKLKQKESELRALDDKEQVEQAIAIIEKKKMKLYIQEDGTVKIKGALMCT. Residues 154–176 form a helical membrane-spanning segment; it reads YLTSVIFKSLFEAGFLLGQWYLY. The Extracellular segment spans residues 177-208; that stretch reads GFVMTPIYVCERVPCPHKVDCFVSRPMEKTIF. A helical transmembrane segment spans residues 209-231; sequence IVFMLVVSLISLFLNVLELIHLV. Residues 232–352 are Cytoplasmic-facing; sequence CKSMIDTLKK…SSSASKKQYV (121 aa). The tract at residues 330–352 is disordered; sequence KTHSTMEKPSTRASSSASKKQYV. Polar residues predominate over residues 340–352; the sequence is TRASSSASKKQYV.

The protein belongs to the connexin family. Alpha-type (group II) subfamily. A connexon is composed of a hexamer of connexins.

It is found in the cell membrane. The protein resides in the cell junction. It localises to the gap junction. Functionally, one gap junction consists of a cluster of closely packed pairs of transmembrane channels, the connexons, through which materials of low MW diffuse from one cell to a neighboring cell. This Xenopus tropicalis (Western clawed frog) protein is Gap junction alpha-4 protein (gja4).